The following is a 399-amino-acid chain: Enoyl-[acyl-carrier-protein] reductase [NADH] (399 aa).

NAD(+)-binding positions include 48-53, 74-75, 111-112, and 139-140; these read GASTGY, FE, DA, and LA. Y225 is a substrate binding site. Residue Y235 is the Proton donor of the active site. Residues K244 and 274–276 contribute to the NAD(+) site; that span reads VVT.

The protein belongs to the TER reductase family. As to quaternary structure, monomer.

The enzyme catalyses a 2,3-saturated acyl-[ACP] + NAD(+) = a (2E)-enoyl-[ACP] + NADH + H(+). The protein operates within lipid metabolism; fatty acid biosynthesis. Functionally, involved in the final reduction of the elongation cycle of fatty acid synthesis (FAS II). Catalyzes the reduction of a carbon-carbon double bond in an enoyl moiety that is covalently linked to an acyl carrier protein (ACP). This chain is Enoyl-[acyl-carrier-protein] reductase [NADH], found in Yersinia pseudotuberculosis serotype O:1b (strain IP 31758).